The following is a 381-amino-acid chain: Dual-specificity RNA methyltransferase RlmN (381 aa).

Residue Glu96 is the Proton acceptor of the active site. One can recognise a Radical SAM core domain in the interval 102-342 (TDDRGTLCVS…TRTTRGDDID (241 aa)). Cys109 and Cys345 are disulfide-bonded. [4Fe-4S] cluster-binding residues include Cys116, Cys120, and Cys123. S-adenosyl-L-methionine-binding positions include 170–171 (GE), Ser202, 224–226 (SLH), and Asn302. Cys345 serves as the catalytic S-methylcysteine intermediate.

The protein belongs to the radical SAM superfamily. RlmN family. Requires [4Fe-4S] cluster as cofactor.

The protein localises to the cytoplasm. It catalyses the reaction adenosine(2503) in 23S rRNA + 2 reduced [2Fe-2S]-[ferredoxin] + 2 S-adenosyl-L-methionine = 2-methyladenosine(2503) in 23S rRNA + 5'-deoxyadenosine + L-methionine + 2 oxidized [2Fe-2S]-[ferredoxin] + S-adenosyl-L-homocysteine. It carries out the reaction adenosine(37) in tRNA + 2 reduced [2Fe-2S]-[ferredoxin] + 2 S-adenosyl-L-methionine = 2-methyladenosine(37) in tRNA + 5'-deoxyadenosine + L-methionine + 2 oxidized [2Fe-2S]-[ferredoxin] + S-adenosyl-L-homocysteine. Specifically methylates position 2 of adenine 2503 in 23S rRNA and position 2 of adenine 37 in tRNAs. m2A2503 modification seems to play a crucial role in the proofreading step occurring at the peptidyl transferase center and thus would serve to optimize ribosomal fidelity. This chain is Dual-specificity RNA methyltransferase RlmN, found in Pseudomonas putida (strain W619).